We begin with the raw amino-acid sequence, 352 residues long: tRNA pseudouridine synthase D (352 aa).

Residue aspartate 81 is the Nucleophile of the active site. Positions 157 to 303 constitute a TRUD domain; that stretch reads GVPNYFGGQR…MSHERRILRL (147 aa).

The protein belongs to the pseudouridine synthase TruD family.

The catalysed reaction is uridine(13) in tRNA = pseudouridine(13) in tRNA. In terms of biological role, responsible for synthesis of pseudouridine from uracil-13 in transfer RNAs. This Pseudomonas putida (strain W619) protein is tRNA pseudouridine synthase D.